The following is a 545-amino-acid chain: CTP synthase (545 aa).

An amidoligase domain region spans residues 1–266 (MTTRYIFVTG…DELVTKRFGI (266 aa)). CTP is bound at residue S14. Residue S14 participates in UTP binding. Residues 15-20 (SLGKGI) and D72 contribute to the ATP site. Mg(2+) contacts are provided by D72 and E140. CTP-binding positions include 147–149 (DIE), 187–192 (KTKPTQ), and K223. UTP-binding positions include 187–192 (KTKPTQ) and K223. 239–241 (KDV) is an ATP binding site. The region spanning 291-542 (TIGMVGKYIE…VAAAAAHQKR (252 aa)) is the Glutamine amidotransferase type-1 domain. L-glutamine is bound at residue G352. C379 (nucleophile; for glutamine hydrolysis) is an active-site residue. Residues 380–383 (LGMQ), E403, and R470 contribute to the L-glutamine site. Catalysis depends on residues H515 and E517.

This sequence belongs to the CTP synthase family. As to quaternary structure, homotetramer.

The catalysed reaction is UTP + L-glutamine + ATP + H2O = CTP + L-glutamate + ADP + phosphate + 2 H(+). The enzyme catalyses L-glutamine + H2O = L-glutamate + NH4(+). It catalyses the reaction UTP + NH4(+) + ATP = CTP + ADP + phosphate + 2 H(+). The protein operates within pyrimidine metabolism; CTP biosynthesis via de novo pathway; CTP from UDP: step 2/2. Allosterically activated by GTP, when glutamine is the substrate; GTP has no effect on the reaction when ammonia is the substrate. The allosteric effector GTP functions by stabilizing the protein conformation that binds the tetrahedral intermediate(s) formed during glutamine hydrolysis. Inhibited by the product CTP, via allosteric rather than competitive inhibition. Functionally, catalyzes the ATP-dependent amination of UTP to CTP with either L-glutamine or ammonia as the source of nitrogen. Regulates intracellular CTP levels through interactions with the four ribonucleotide triphosphates. The polypeptide is CTP synthase (Shewanella woodyi (strain ATCC 51908 / MS32)).